The chain runs to 233 residues: Large ribosomal subunit protein uL1 (233 aa).

The protein belongs to the universal ribosomal protein uL1 family. Part of the 50S ribosomal subunit.

In terms of biological role, binds directly to 23S rRNA. The L1 stalk is quite mobile in the ribosome, and is involved in E site tRNA release. Functionally, protein L1 is also a translational repressor protein, it controls the translation of the L11 operon by binding to its mRNA. The protein is Large ribosomal subunit protein uL1 of Geobacillus stearothermophilus (Bacillus stearothermophilus).